Here is a 177-residue protein sequence, read N- to C-terminus: Adenine phosphoribosyltransferase (177 aa).

It belongs to the purine/pyrimidine phosphoribosyltransferase family. Homodimer.

The protein resides in the cytoplasm. It carries out the reaction AMP + diphosphate = 5-phospho-alpha-D-ribose 1-diphosphate + adenine. It participates in purine metabolism; AMP biosynthesis via salvage pathway; AMP from adenine: step 1/1. In terms of biological role, catalyzes a salvage reaction resulting in the formation of AMP, that is energically less costly than de novo synthesis. The sequence is that of Adenine phosphoribosyltransferase from Chlorobium limicola (strain DSM 245 / NBRC 103803 / 6330).